Reading from the N-terminus, the 1154-residue chain is DNA-directed RNA polymerase subunit beta (1154 aa).

The segment covering 1108–1123 (ELGIDIQGEDRSERAG) has biased composition (basic and acidic residues). Positions 1108-1136 (ELGIDIQGEDRSERAGEPASPDEMDDEEE) are disordered. Residues 1127–1136 (SPDEMDDEEE) show a composition bias toward acidic residues.

Belongs to the RNA polymerase beta chain family. In terms of assembly, the RNAP catalytic core consists of 2 alpha, 1 beta, 1 beta' and 1 omega subunit. When a sigma factor is associated with the core the holoenzyme is formed, which can initiate transcription.

The catalysed reaction is RNA(n) + a ribonucleoside 5'-triphosphate = RNA(n+1) + diphosphate. DNA-dependent RNA polymerase catalyzes the transcription of DNA into RNA using the four ribonucleoside triphosphates as substrates. The chain is DNA-directed RNA polymerase subunit beta from Heliobacterium modesticaldum (strain ATCC 51547 / Ice1).